The primary structure comprises 181 residues: Large ribosomal subunit protein uL5 (181 aa).

It belongs to the universal ribosomal protein uL5 family. Part of the 50S ribosomal subunit; part of the 5S rRNA/L5/L18/L25 subcomplex. Contacts the 5S rRNA and the P site tRNA. Forms a bridge to the 30S subunit in the 70S ribosome.

In terms of biological role, this is one of the proteins that bind and probably mediate the attachment of the 5S RNA into the large ribosomal subunit, where it forms part of the central protuberance. In the 70S ribosome it contacts protein S13 of the 30S subunit (bridge B1b), connecting the 2 subunits; this bridge is implicated in subunit movement. Contacts the P site tRNA; the 5S rRNA and some of its associated proteins might help stabilize positioning of ribosome-bound tRNAs. The protein is Large ribosomal subunit protein uL5 of Acaryochloris marina (strain MBIC 11017).